The following is a 509-amino-acid chain: Aromatase (509 aa).

Residue C437 coordinates heme.

Belongs to the cytochrome P450 family. Requires heme as cofactor.

Its subcellular location is the membrane. It carries out the reaction testosterone + 3 reduced [NADPH--hemoprotein reductase] + 3 O2 = 17beta-estradiol + formate + 3 oxidized [NADPH--hemoprotein reductase] + 4 H2O + 4 H(+). The catalysed reaction is androst-4-ene-3,17-dione + 3 reduced [NADPH--hemoprotein reductase] + 3 O2 = estrone + formate + 3 oxidized [NADPH--hemoprotein reductase] + 4 H2O + 4 H(+). Its function is as follows. Catalyzes the formation of aromatic C18 estrogens from C19 androgens. This is Aromatase (CYP19A1) from Taeniopygia guttata (Zebra finch).